Reading from the N-terminus, the 130-residue chain is Protein CPn_0713/CP_0033/CPj0713/CpB0740 (130 aa).

Belongs to the chlamydial CPn_0713/CT_663/TC_0034 family.

The protein is Protein CPn_0713/CP_0033/CPj0713/CpB0740 of Chlamydia pneumoniae (Chlamydophila pneumoniae).